Consider the following 476-residue polypeptide: MKSIEDFMKKYELSFDGVTLIAGVSGGPDSMALLHALHHTVPASATLIAAHVDHMFRGEESERDMRFVQDYCEAEGIQCEAVQIDVLAFAAENNLNKQAAARECRYAFFQELMKRHRAEYLVLGHHGDDQVETMLMKMAKGTVGIGLAGIQPKRRFDSGWLLRPFLKLSKDDLLAYCKENRIPFRTDPSNSEDDYTRNRFRHHVLPFLKKESEDVHKRFQSVSEFLTEDELYLQALTKDKMNTVITSKSSSGVEISIERLLALPMPLQRRGVHLILNYLYENVPSAFSAHHIQVFLDWISQDGPSGSLDFPNGLKVAKSYHTCLFTFQRLQCENVSYHYEISGAGEEELILPGGSSLHVSGPGSTRKLQGNDVFATSPKQVQFPLYVRTRQNGDRVKLKGMNGSKKVKDIFIDEKVPLSKRDSWPIVTDAVGNIIWIPGLKKTIFEELDVTNNDRIVLQYRQHEKCRGLAKNETGY.

25–30 (SGGPDS) lines the ATP pocket.

It belongs to the tRNA(Ile)-lysidine synthase family.

It localises to the cytoplasm. It carries out the reaction cytidine(34) in tRNA(Ile2) + L-lysine + ATP = lysidine(34) in tRNA(Ile2) + AMP + diphosphate + H(+). In terms of biological role, ligates lysine onto the cytidine present at position 34 of the AUA codon-specific tRNA(Ile) that contains the anticodon CAU, in an ATP-dependent manner. Cytidine is converted to lysidine, thus changing the amino acid specificity of the tRNA from methionine to isoleucine. In Bacillus licheniformis (strain ATCC 14580 / DSM 13 / JCM 2505 / CCUG 7422 / NBRC 12200 / NCIMB 9375 / NCTC 10341 / NRRL NRS-1264 / Gibson 46), this protein is tRNA(Ile)-lysidine synthase.